The primary structure comprises 198 residues: Inosine triphosphate pyrophosphatase (198 aa).

An N-acetylalanine modification is found at Ala2. 14 to 19 (TGNAKK) is an ITP binding site. Glu44 serves as a coordination point for Mg(2+). ITP-binding positions include Lys56, 72–73 (DT), and Lys89. At Ser146 the chain carries Phosphoserine. Residues 149–152 (FGWD), Lys172, and 177–178 (HR) contribute to the ITP site.

The protein belongs to the HAM1 NTPase family. Homodimer. It depends on Mg(2+) as a cofactor. Requires Mn(2+) as cofactor.

The protein resides in the cytoplasm. The catalysed reaction is ITP + H2O = IMP + diphosphate + H(+). It catalyses the reaction dITP + H2O = dIMP + diphosphate + H(+). It carries out the reaction XTP + H2O = XMP + diphosphate + H(+). The enzyme catalyses N(6)-hydroxy-dATP + H2O = N(6)-hydroxy-dAMP + diphosphate + H(+). Functionally, pyrophosphatase that hydrolyzes the non-canonical purine nucleotides inosine triphosphate (ITP), deoxyinosine triphosphate (dITP) as well as 2'-deoxy-N-6-hydroxylaminopurine triphosphate (dHAPTP) and xanthosine 5'-triphosphate (XTP) to their respective monophosphate derivatives. The enzyme does not distinguish between the deoxy- and ribose forms. Probably excludes non-canonical purines from RNA and DNA precursor pools, thus preventing their incorporation into RNA and DNA and avoiding chromosomal lesions. In Mus musculus (Mouse), this protein is Inosine triphosphate pyrophosphatase (Itpa).